The chain runs to 407 residues: 4-hydroxy-3-methylbut-2-en-1-yl diphosphate synthase (ferredoxin) (407 aa).

[4Fe-4S] cluster-binding residues include Cys-316, Cys-319, Cys-350, and Glu-357.

This sequence belongs to the IspG family. It depends on [4Fe-4S] cluster as a cofactor.

The catalysed reaction is (2E)-4-hydroxy-3-methylbut-2-enyl diphosphate + 2 oxidized [2Fe-2S]-[ferredoxin] + H2O = 2-C-methyl-D-erythritol 2,4-cyclic diphosphate + 2 reduced [2Fe-2S]-[ferredoxin] + H(+). It functions in the pathway isoprenoid biosynthesis; isopentenyl diphosphate biosynthesis via DXP pathway; isopentenyl diphosphate from 1-deoxy-D-xylulose 5-phosphate: step 5/6. Converts 2C-methyl-D-erythritol 2,4-cyclodiphosphate (ME-2,4cPP) into 1-hydroxy-2-methyl-2-(E)-butenyl 4-diphosphate. The sequence is that of 4-hydroxy-3-methylbut-2-en-1-yl diphosphate synthase (ferredoxin) from Prochlorococcus marinus (strain SARG / CCMP1375 / SS120).